A 183-amino-acid polypeptide reads, in one-letter code: Photosystem I assembly protein Ycf3 (183 aa).

TPR repeat units follow at residues 35–68, 72–105, and 120–153; these read AFIY…EIDS, SYIL…NSFL, and GEQA…SPDN.

The protein belongs to the Ycf3 family.

The protein resides in the plastid. Its subcellular location is the chloroplast thylakoid membrane. Its function is as follows. Essential for the assembly of the photosystem I (PSI) complex. May act as a chaperone-like factor to guide the assembly of the PSI subunits. The chain is Photosystem I assembly protein Ycf3 from Adiantum capillus-veneris (Maidenhair fern).